Reading from the N-terminus, the 126-residue chain is MAQLPPEDIATMPAQKVVFNAPFDNKATYYVRIINPGTKRIGFAFKTTKPKRINMNPPNGVLGPKESVNVAISCDAFDPSSEDSKGDRVTVEWCNTPDPAAAAFKLEWFQGDGMVRRKNLPIEYNV.

An N-acetylalanine modification is found at A2. Residues 8–125 form the MSP domain; the sequence is DIATMPAQKV…RRKNLPIEYN (118 aa).

As to expression, sperm.

The protein resides in the cell projection. It is found in the pseudopodium. The protein localises to the cytoplasm. It localises to the cytoskeleton. Its function is as follows. Central component in molecular interactions underlying sperm crawling. Forms an extensive filament system that extends from sperm villipoda, along the leading edge of the pseudopod. The polypeptide is Major sperm protein 3 (MSP-3) (Globodera rostochiensis (Golden nematode worm)).